Reading from the N-terminus, the 1597-residue chain is Collagen alpha-1(XVII) chain (1597 aa).

2 disordered regions span residues 1 to 155 (MDVT…PSTR) and 168 to 188 (GSRS…PIPK). Topologically, residues 1 to 468 (MDVTKKNKRD…CGSCCSWWKW (468 aa)) are cytoplasmic. A nonhelical region (NC16A) region spans residues 1–567 (MDVTKKNKRD…AEQENGNLRG (567 aa)). Residues 9-19 (RDGSEVTERII) show a composition bias toward basic and acidic residues. 3 stretches are compositionally biased toward polar residues: residues 58 to 96 (THGS…SPGS), 111 to 120 (EGSSSGNSSP), and 170 to 184 (RSAS…SNTL). The segment at 146–231 (RLQSASPSTR…WSSTLPAGSS (86 aa)) is necessary for interaction with DST and for the recruitment of DST to hemidesmosome. Residues 469–489 (LLGLLLTWLLLLGLLFGLIAL) form a helical; Signal-anchor for type II membrane protein membrane-spanning segment. Over 490–1597 (AEEVRALKAR…KGGSWRLTSY (1108 aa)) the chain is Extracellular. Disordered regions lie at residues 562–857 (NGNL…SSSS), 907–927 (LRGP…FRVR), 970–1041 (LETY…ISSS), 1289–1316 (TAGV…VSGA), and 1344–1394 (FIVG…SSMG). The tract at residues 568-1572 (SPGPKGDMGS…ELPLEEQPLA (1005 aa)) is triple-helical region. A compositionally biased stretch (low complexity) spans 604-632 (PKGQKGSVGEPGMEGPMGQRGREGPMGPR). The segment covering 665–674 (GPKGSGGSPG) has biased composition (gly residues). Low complexity-rich tracts occupy residues 730–748 (PGAV…AGPD) and 774–796 (DPGK…PGRP). Residues 820 to 838 (PGPPGPPGAMGPPGPPGAP) are compositionally biased toward pro residues. Low complexity predominate over residues 847–857 (AGESFMGSSSS). 5 stretches are compositionally biased toward pro residues: residues 910-922 (PPGP…PPDL), 977-986 (PPGPPGPPGP), 1023-1035 (PGPP…PGPP), 1296-1310 (PGPP…PRGP), and 1348-1357 (PPGPPGPQGP). Low complexity predominate over residues 1377-1393 (SSHSASVSRGSSYSSSM). A glycan (N-linked (GlcNAc...) asparagine) is linked at Asn-1493. The segment at 1531 to 1566 (GHPALEGTREKKETKVTKSMRGGEREASPSSHELPL) is disordered. Residues 1537 to 1557 (GTREKKETKVTKSMRGGEREA) are compositionally biased toward basic and acidic residues. The segment at 1573-1597 (SVLAMAYGVHVKISPKGGSWRLTSY) is nonhelical region (NC1).

As to quaternary structure, homotrimers of alpha 1(XVII)chains. Interacts (via cytoplasmic region) with ITGB4 (via cytoplasmic region). Interacts (via cytoplasmic region) with DST (via N-terminus). Interacts (via N-terminus) with PLEC. Interacts (via cytoplasmic region) with DSP. The intracellular/endo domain is disulfide-linked. In terms of processing, prolines at the third position of the tripeptide repeating unit (G-X-Y) are hydroxylated in some or all of the chains. Post-translationally, the ectodomain is shedded from the surface of keratinocytes resulting in a 120-kDa soluble form, also named as 120 kDa linear IgA disease antigen homolog. The shedding is mediated by membrane-bound metalloproteases. Upper lamina lucidalhemidesmosome.

It localises to the cell junction. It is found in the hemidesmosome. The protein localises to the membrane. Its subcellular location is the secreted. The protein resides in the extracellular space. It localises to the extracellular matrix. It is found in the basement membrane. The 120 kDa linear IgA disease antigen homolog is an anchoring filament component involved in dermal-epidermal cohesion. In Canis lupus familiaris (Dog), this protein is Collagen alpha-1(XVII) chain (COL17A1).